A 112-amino-acid chain; its full sequence is uncharacterized protein (112 aa).

2 disordered regions span residues 1–53 (MSKL…QRLK) and 80–112 (MINQ…MLEL). Residues 8-22 (SALQKLIESQKNPNA) are compositionally biased toward polar residues. Over residues 86–96 (ETKKRKRKQKK) the composition is skewed to basic residues. Over residues 101–112 (DYGVFEEDMLEL) the composition is skewed to acidic residues.

The protein resides in the nucleus. It is found in the nucleolus. This is an uncharacterized protein from Schizosaccharomyces pombe (strain 972 / ATCC 24843) (Fission yeast).